Reading from the N-terminus, the 625-residue chain is MSQESDNNKRLVALVPMPSDPPFNTRRAYTSEDEAWKSYLENPLTAATKAMMSINGDEDSAAALGLLYDYYKVPRDKRLLSVSKASDSQEDQEKRNCLGTSEAQSNLSGGENRVQVLKTVPVNLSLNQDHLENSKREQYSISFPESSAIIPVSGITVVKAEDFTPVFMAPPVHYPRGDGEEQRVVIFEQTQYDVPSLATHSAYLKDDQRSTPDSTYSESFKDAATEKFRSASVGAEEYMYDQTSSGTFQYTLEATKSLRQKQGEGPMTYLNKGQFYAITLSETGDNKCFRHPISKVRSVVMVVFSEDKNRDEQLKYWKYWHSRQHTAKQRVLDIADYKESFNTIGNIEEIAYNAVSFTWDVNEEAKIFITVNCLSTDFSSQKGVKGLPLMIQIDTYSYNNRSNKPIHRAYCQIKVFCDKGAERKIRDEERKQNRKKGKGQASQTQCNSSSDGKLAAIPLQKKSDITYFKTMPDLHSQPVLFIPDVHFANLQRTGQVYYNTDDEREGGSVLVKRMFRPMEEEFGPVPSKQMKEEGTKRVLLYVRKETDDVFDALMLKSPTVKGLMEAISEKYGLPVEKIAKLYKKSKKGILVNMDDNIIEHYSNEDTFILNMESMVEGFKVTLMEI.

Disordered regions lie at residues 1 to 24 (MSQE…PPFN), 82 to 112 (VSKA…GGEN), and 428 to 453 (EERK…SDGK). The transcription activation stretch occupies residues 1–93 (MSQESDNNKR…KASDSQEDQE (93 aa)). Composition is skewed to polar residues over residues 98–109 (LGTSEAQSNLSG) and 440–451 (QASQTQCNSSSD). In terms of domain architecture, Grh/CP2 DB spans 244 to 482 (SSGTFQYTLE…DLHSQPVLFI (239 aa)).

This sequence belongs to the grh/CP2 family. Grainyhead subfamily. In terms of assembly, homodimer, also forms heterodimers with GRHL1 or GRHL3. Expressed in keratinocytes (at protein level). Highly expressed in placenta, prostate, brain and kidney. Lower-level expression in a variety of epithelial tissues such as thymus, lung, salivary gland, mammary gland and digestive tract. Expressed in the cochlear. Expressed in corneal epithelial cells, but not in the endothelium or stroma.

The protein localises to the nucleus. It localises to the membrane. Functionally, transcription factor playing an important role in primary neurulation and in epithelial development. Binds directly to the consensus DNA sequence 5'-AACCGGTT-3' acting as an activator and repressor on distinct target genes. During embryogenesis, plays unique and cooperative roles with GRHL3 in establishing distinct zones of primary neurulation. Essential for closure 3 (rostral end of the forebrain), functions cooperatively with GRHL3 in closure 2 (forebrain/midbrain boundary) and posterior neuropore closure. Regulates epithelial morphogenesis acting as a target gene-associated transcriptional activator of apical junctional complex components. Up-regulates of CLDN3 and CLDN4, as well as of RAB25, which increases the CLDN4 protein and its localization at tight junctions. Comprises an essential component of the transcriptional machinery that establishes appropriate expression levels of CLDN4 and CDH1 in different types of epithelia. Exhibits functional redundancy with GRHL3 in epidermal morphogenetic events and epidermal wound repair. In lung, forms a regulatory loop with NKX2-1 that coordinates lung epithelial cell morphogenesis and differentiation. In keratinocytes, plays a role in telomerase activation during cellular proliferation, regulates TERT expression by binding to TERT promoter region and inhibiting DNA methylation at the 5'-CpG island, possibly by interfering with DNMT1 enzyme activity. In addition, impairs keratinocyte differentiation and epidermal function by inhibiting the expression of genes clustered at the epidermal differentiation complex (EDC) as well as GRHL1 and GRHL3 through epigenetic mechanisms. This chain is Grainyhead-like protein 2 homolog (GRHL2), found in Homo sapiens (Human).